A 289-amino-acid chain; its full sequence is Toxin tox21A (289 aa).

The first 14 residues, 1–14, serve as a signal peptide directing secretion; sequence MNLYFLFFISTILA. Positions 15 to 27 are excised as a propeptide; that stretch reads AKPFNSFNKTSLI. Residues 270 to 289 form a disordered region; it reads DKDITVHENAGDPKSDSRRC.

Contains several disulfide bonds. Posterior glands which appear to be connected with the stylet through a series of ducts.

It localises to the secreted. Its function is as follows. Has contracting-paralyzing activity in insect larvae. The sequence is that of Toxin tox21A from Pyemotes tritici (Straw itch mite).